The primary structure comprises 779 residues: Phosphoribosylformylglycinamidine synthase subunit PurL (779 aa).

Residue His52 is part of the active site. ATP is bound by residues Tyr55 and Lys94. Glu96 is a binding site for Mg(2+). Substrate is bound by residues 97-100 (SHNH) and Arg119. His98 functions as the Proton acceptor in the catalytic mechanism. Asp120 contributes to the Mg(2+) binding site. Residue Gln243 coordinates substrate. Asp271 is a binding site for Mg(2+). 315–317 (ESQ) serves as a coordination point for substrate. Positions 523 and 560 each coordinate ATP. Mg(2+) is bound at residue Asn561. Substrate is bound at residue Ser563.

It belongs to the FGAMS family. Monomer. Part of the FGAM synthase complex composed of 1 PurL, 1 PurQ and 2 PurS subunits.

Its subcellular location is the cytoplasm. It carries out the reaction N(2)-formyl-N(1)-(5-phospho-beta-D-ribosyl)glycinamide + L-glutamine + ATP + H2O = 2-formamido-N(1)-(5-O-phospho-beta-D-ribosyl)acetamidine + L-glutamate + ADP + phosphate + H(+). It participates in purine metabolism; IMP biosynthesis via de novo pathway; 5-amino-1-(5-phospho-D-ribosyl)imidazole from N(2)-formyl-N(1)-(5-phospho-D-ribosyl)glycinamide: step 1/2. Functionally, part of the phosphoribosylformylglycinamidine synthase complex involved in the purines biosynthetic pathway. Catalyzes the ATP-dependent conversion of formylglycinamide ribonucleotide (FGAR) and glutamine to yield formylglycinamidine ribonucleotide (FGAM) and glutamate. The FGAM synthase complex is composed of three subunits. PurQ produces an ammonia molecule by converting glutamine to glutamate. PurL transfers the ammonia molecule to FGAR to form FGAM in an ATP-dependent manner. PurS interacts with PurQ and PurL and is thought to assist in the transfer of the ammonia molecule from PurQ to PurL. This is Phosphoribosylformylglycinamidine synthase subunit PurL from Prochlorococcus marinus (strain MIT 9301).